Reading from the N-terminus, the 55-residue chain is MKTLALFLVLVCVLGLVQSWEWPWNRKPTKFPIPSPNPRDKWCRLNLGPAWGGRC.

An N-terminal signal peptide occupies residues 1–19 (MKTLALFLVLVCVLGLVQS). The segment at 20 to 33 (WEWPWNRKPTKFPI) is essential for binding to sperm. Hydroxyproline is present on residues proline 28 and proline 32. Isoleucine 33 is modified (isoleucine derivative). Proline 34, proline 36, and proline 38 each carry hydroxyproline. Residues 36 to 55 (PNPRDKWCRLNLGPAWGGRC) form a sufficient to induce PMR region. A disulfide bridge links cysteine 43 with cysteine 55.

The protein belongs to the Drosophila sex peptide family. Sperm-bound protein is cleaved to release an active C-terminal peptide. Gradual release from stored sperm may function to prolong PMR and enhance male reproductive success. Main cells of the accessory glands of males (paragonial gland).

Its subcellular location is the secreted. Male seminal protein which triggers short- and long-term post-mating behavioral responses (PMR) in female Drosophila. Binds initially to sperm where it is later cleaved to release an active peptide within the female reproductive tract. Signals via the sex peptide receptor (SPR) in female flies; may also act via other receptors. Moderates the activity of distinct neuronal circuitries in the female genital tract to promote specific PMRs including: enhanced ovulation, increased egg laying rate, increased feeding/foraging rate, induced antimicrobial peptide synthesis, reduced mating receptivity, reduced day-time sleep and reduced lifespan in multiple mated females. The chain is Accessory gland-specific peptide 70A (SP) from Drosophila melanogaster (Fruit fly).